We begin with the raw amino-acid sequence, 391 residues long: Putative gustatory receptor 98a (391 aa).

The Cytoplasmic portion of the chain corresponds to 1-31 (MEQMSGELHAASLLYMRRLMKCLGMLPFGQN). The helical transmembrane segment at 32–52 (LFSKGFCYVLLFVSLGFSSYW) threads the bilayer. Residues 53–74 (RFSFDYEFDYDFLNDRFSSTID) lie on the Extracellular side of the membrane. A helical transmembrane segment spans residues 75-95 (LSNFVALVLGHAIIVLELLWG). Over 96–128 (NCSKDVDRQLQAIHSQIKLQLGTSNSTDRVRRY) the chain is Cytoplasmic. The chain crosses the membrane as a helical span at residues 129-149 (CNWIYGSLIIRWLIFIVVTIY). Over 150–173 (SNRALTINATYSELVFLARFSEFT) the chain is Extracellular. N-linked (GlcNAc...) asparagine glycosylation occurs at asparagine 157. A helical transmembrane segment spans residues 174 to 194 (LYCAVILFIYQELIVGGSNVL). Over 195 to 239 (DELYRTRYEMWSIRRLSLQKLAKLQAIHNSLWQAIRCLECYFQLS) the chain is Cytoplasmic. The chain crosses the membrane as a helical span at residues 240-260 (LITLLMKFFIDTSALPYWLYL). The Extracellular portion of the chain corresponds to 261–272 (SRVEHTRVAVQH). A helical membrane pass occupies residues 273 to 293 (YVATVECIKLLEIVVPCYLCT). At 294-347 (RCDAMQRKFLSMFYTVTTDRRSSQLNAALRSLNLQLSQEKYKFSAGGMVDINTE) the chain is on the cytoplasmic side. A helical transmembrane segment spans residues 348-368 (MLGKFFFGMISYIVICIQFSI). Over 369 to 391 (NFRAKKMSNEQMSQNITSTSAPI) the chain is Extracellular. Residue asparagine 383 is glycosylated (N-linked (GlcNAc...) asparagine).

The protein belongs to the insect chemoreceptor superfamily. Gustatory receptor (GR) family. Gr2a subfamily.

It localises to the cell membrane. Functionally, probable gustatory receptor which mediates acceptance or avoidance behavior, depending on its substrates. In Drosophila melanogaster (Fruit fly), this protein is Putative gustatory receptor 98a (Gr98a).